Consider the following 431-residue polypeptide: Enolase (431 aa).

Q168 is a binding site for (2R)-2-phosphoglycerate. E210 acts as the Proton donor in catalysis. The Mg(2+) site is built by D247, E291, and D318. The (2R)-2-phosphoglycerate site is built by K343, R372, S373, and K394. K343 (proton acceptor) is an active-site residue.

Belongs to the enolase family. As to quaternary structure, component of the RNA degradosome, a multiprotein complex involved in RNA processing and mRNA degradation. Mg(2+) is required as a cofactor.

The protein localises to the cytoplasm. Its subcellular location is the secreted. The protein resides in the cell surface. It carries out the reaction (2R)-2-phosphoglycerate = phosphoenolpyruvate + H2O. Its pathway is carbohydrate degradation; glycolysis; pyruvate from D-glyceraldehyde 3-phosphate: step 4/5. Catalyzes the reversible conversion of 2-phosphoglycerate (2-PG) into phosphoenolpyruvate (PEP). It is essential for the degradation of carbohydrates via glycolysis. This Acinetobacter baumannii (strain SDF) protein is Enolase.